A 1173-amino-acid polypeptide reads, in one-letter code: Pleckstrin homology domain-containing family A member 6 (1173 aa).

The span at 1–22 (MSNKTGGKRSATINSDIANHNM) shows a compositional bias: polar residues. Positions 1–39 (MSNKTGGKRSATINSDIANHNMVSEVPPERPNIRATRTS) are disordered. One can recognise a PH domain in the interval 59 to 158 (PVTKAGWLYK…WIQAMGEAAR (100 aa)). Residues 163-346 (PAQKSVPQPV…PSRFYPMPRR (184 aa)) are disordered. Residues 201–233 (LEPEAKTRGEGDGRGCEKAERRPERPEVKKETL) show a composition bias toward basic and acidic residues. A phosphoserine mark is found at Ser-247 and Ser-251. 2 stretches are compositionally biased toward polar residues: residues 270–281 (NGWQYSSPSRPG) and 311–322 (RKSSMNQLQQWV). Phosphoserine occurs at positions 314, 459, 461, and 472. The residue at position 492 (Tyr-492) is a Phosphotyrosine. Ser-665 bears the Phosphoserine mark. Disordered regions lie at residues 737 to 872 (RKNN…PRDI) and 888 to 984 (ALNK…RPAY). Composition is skewed to low complexity over residues 761 to 782 (SSNS…SPFS) and 789 to 799 (GSPTKPGSSEE). A compositionally biased stretch (pro residues) spans 815–824 (ESPPTVPPLP). Residue Ser-864 is modified to Phosphoserine. Phosphothreonine is present on Thr-868. Position 901 is a phosphoserine (Ser-901). Thr-908 is modified (phosphothreonine). Polar residues predominate over residues 915–926 (RTTNGLTNGLSS). Phosphoserine is present on Ser-925. Over residues 940–952 (GKVKMSVEEQMDR) the composition is skewed to basic and acidic residues. Positions 953 to 967 (MRRHQSGSMKEKRRS) are enriched in basic residues. Ser-973, Ser-979, and Ser-992 each carry phosphoserine. A Phosphothreonine modification is found at Thr-1045. Ser-1065 bears the Phosphoserine mark. 2 disordered regions span residues 1093–1114 (PIGE…QEQE) and 1130–1173 (RGRM…TMRV). The residue at position 1140 (Thr-1140) is a Phosphothreonine. Pro residues predominate over residues 1141-1155 (PSPPTSPASPTPPVN). Ser-1142 is subject to Phosphoserine. A Phosphothreonine modification is found at Thr-1145. 2 positions are modified to phosphoserine: Ser-1146 and Ser-1149. Thr-1151 is subject to Phosphothreonine.

In Mus musculus (Mouse), this protein is Pleckstrin homology domain-containing family A member 6 (Plekha6).